The sequence spans 252 residues: ATP synthase subunit a (252 aa).

Transmembrane regions (helical) follow at residues 33–53 (GQVFITTWFVMALLIAVAFVA), 92–112 (VPFVGTLFLFIFVCNWSGALV), 130–150 (DINTTVALALLVSLAYFYAGL), 196–216 (LVVSVLVLLVPLFVPLPVMVL), and 217–237 (GLFTSAIQALVFATLAATYIG).

This sequence belongs to the ATPase A chain family. As to quaternary structure, F-type ATPases have 2 components, CF(1) - the catalytic core - and CF(0) - the membrane proton channel. CF(1) has five subunits: alpha(3), beta(3), gamma(1), delta(1), epsilon(1). CF(0) has four main subunits: a, b, b' and c.

The protein localises to the cellular thylakoid membrane. Key component of the proton channel; it plays a direct role in the translocation of protons across the membrane. This chain is ATP synthase subunit a, found in Thermosynechococcus vestitus (strain NIES-2133 / IAM M-273 / BP-1).